The following is a 341-amino-acid chain: Hydrogenase expression/formation protein HupE (341 aa).

It belongs to the HypE family.

Functionally, may be involved in the maturation of the NifE hydrogenase. This is Hydrogenase expression/formation protein HupE (hupE) from Azotobacter chroococcum mcd 1.